The following is a 283-amino-acid chain: uncharacterized protein (283 aa).

This is an uncharacterized protein from Streptomyces coelicolor (strain ATCC BAA-471 / A3(2) / M145).